A 57-amino-acid chain; its full sequence is Putative secreted protein MT0250 (57 aa).

A signal peptide spans 1–32 (MNRIVAPAAASVVVGLLLGAAAIFGVTLMVQQ). Residues 34–57 (KKPPLPGGDPSSSVLNRVEYGNRS) are disordered.

The polypeptide is Putative secreted protein MT0250 (Mycobacterium tuberculosis (strain CDC 1551 / Oshkosh)).